We begin with the raw amino-acid sequence, 289 residues long: BTB/POZ domain-containing protein KCTD7 (289 aa).

The span at 1 to 10 (MVVVTGQSKG) shows a compositional bias: polar residues. The segment at 1 to 35 (MVVVTGQSKGSGDPDEAMSSSDAEDDFQEPATPTA) is disordered. Residues 51-149 (EVVPLNVGGM…HLEDVQPLKG (99 aa)) enclose the BTB domain.

The protein resides in the cell membrane. The protein localises to the cytoplasm. It localises to the cytosol. In terms of biological role, may be involved in the control of excitability of cortical neurons. This Gallus gallus (Chicken) protein is BTB/POZ domain-containing protein KCTD7 (KCTD7).